Reading from the N-terminus, the 201-residue chain is Hydroxymethylphosphonate dioxygenase (201 aa).

Fe cation is bound by residues His-47, His-71, Asp-72, His-94, His-117, and Asp-174.

Requires Fe(2+) as cofactor.

It catalyses the reaction hydroxymethylphosphonate + O2 = formate + phosphate + 2 H(+). The catalysed reaction is (1R)-(2-amino-1-hydroxyethyl)phosphonate + O2 = glycine + phosphate + 2 H(+). The enzyme catalyses (1R)-(1-hydroxyethyl)phosphonate + O2 = acetate + phosphate + 2 H(+). Its function is as follows. Part of an oxidative pathway for utilization of methylphosphonic acid as a phosphate source. Catalyzes the oxidation of hydroxymethylphosphonic acid to produce formate and phosphate. Can also use (1R)-(2-amino-1-hydroxyethyl)phosphonic acid and (R)-1-hydroxyethylphosphonic acid with similar catalytic efficiency. This is Hydroxymethylphosphonate dioxygenase from Gimesia maris (strain ATCC 29201 / DSM 8797 / 534-30) (Planctomyces maris).